A 445-amino-acid polypeptide reads, in one-letter code: Ribosomal protein uS12 methylthiotransferase RimO (445 aa).

In terms of domain architecture, MTTase N-terminal spans 4–119 (IKVALVSLGC…LLESIKVFLK (116 aa)). Residues Cys13, Cys48, Cys82, Cys156, Cys160, and Cys163 each contribute to the [4Fe-4S] cluster site. One can recognise a Radical SAM core domain in the interval 142-372 (TTPTYTAYVR…MILQQSISKD (231 aa)). The region spanning 375 to 441 (KEKIGKTYEV…EYDLIGVVYN (67 aa)) is the TRAM domain.

The protein belongs to the methylthiotransferase family. RimO subfamily. [4Fe-4S] cluster serves as cofactor.

It localises to the cytoplasm. The catalysed reaction is L-aspartate(89)-[ribosomal protein uS12]-hydrogen + (sulfur carrier)-SH + AH2 + 2 S-adenosyl-L-methionine = 3-methylsulfanyl-L-aspartate(89)-[ribosomal protein uS12]-hydrogen + (sulfur carrier)-H + 5'-deoxyadenosine + L-methionine + A + S-adenosyl-L-homocysteine + 2 H(+). Its function is as follows. Catalyzes the methylthiolation of an aspartic acid residue of ribosomal protein uS12. This Clostridium botulinum (strain ATCC 19397 / Type A) protein is Ribosomal protein uS12 methylthiotransferase RimO.